The sequence spans 97 residues: uncharacterized protein (97 aa).

The segment at 58-97 is disordered; that stretch reads SLLLPRTVQTGGTEREKPGPGQRKRGAHCSACKRSSTRPS.

This is an uncharacterized protein from Homo sapiens (Human).